A 599-amino-acid polypeptide reads, in one-letter code: Sulfite reductase [NADPH] flavoprotein alpha-component (599 aa).

The Flavodoxin-like domain occupies 64 to 202 (ITIISASQTG…AASEWRARVV (139 aa)). Residues 70-75 (SQTGNA), 117-120 (STQG), and 153-162 (LGDSSYEFFC) each bind FMN. An FAD-binding FR-type domain is found at 234–448 (DAPLVASLSV…IEHNDNFRLP (215 aa)). FAD contacts are provided by residues threonine 322, alanine 356, 386–389 (RLYS), 404–406 (TVG), tyrosine 410, and 419–422 (GGAS). NADP(+)-binding positions include 519–520 (SR), 525–529 (KVYVQ), and aspartate 561. An FAD-binding site is contributed by tyrosine 599.

The protein belongs to the NADPH-dependent sulphite reductase flavoprotein subunit CysJ family. This sequence in the N-terminal section; belongs to the flavodoxin family. It in the C-terminal section; belongs to the flavoprotein pyridine nucleotide cytochrome reductase family. Alpha(8)-beta(8). The alpha component is a flavoprotein, the beta component is a hemoprotein. It depends on FAD as a cofactor. Requires FMN as cofactor.

It catalyses the reaction hydrogen sulfide + 3 NADP(+) + 3 H2O = sulfite + 3 NADPH + 4 H(+). Its pathway is sulfur metabolism; hydrogen sulfide biosynthesis; hydrogen sulfide from sulfite (NADPH route): step 1/1. Functionally, component of the sulfite reductase complex that catalyzes the 6-electron reduction of sulfite to sulfide. This is one of several activities required for the biosynthesis of L-cysteine from sulfate. The flavoprotein component catalyzes the electron flow from NADPH -&gt; FAD -&gt; FMN to the hemoprotein component. This is Sulfite reductase [NADPH] flavoprotein alpha-component from Shigella flexneri serotype 5b (strain 8401).